Here is a 923-residue protein sequence, read N- to C-terminus: MHRVMTIRPDIPPQPDIAAPAEPPARVSPMMEQYHEIKAANPGLLLFYRMGDFYELFFEDAEIASRALGITLTKRGKHLGADIPMCGVPVERSDDYLHRLIALGHRVAVCEQTEDPAAARARKSVVRRDVVRLITPGTLTEDTLLDARANNYLMAIARTRGSAGVDRIGLAWIDISTGEFCVTECATGELSATLARINPNEAIVSDALYSDAELGPSLRELAAVTPLTRDVFDSATAERRLCDYFAVATMDGLAALSRLEAAAAAACVTYVDRTQLGKRPPLSPPAREAAGATMAIDPATRANLELTRTLGGERRGSLLDAIDCTVTAAGSRLLAQRLAAPLTDEAAIARRLDAVAAFVADSALREQIRSALRAAPDMARALARLSLGRGGPRDLASLRDGVSAADKVLAQLSQLAQPPHDIAAAMAALRRPSRDLCQELARALADDLPLLKRDGGFVRDGYEAALDETRKLRDASRLVVAAMQARYADETGVKGLKIRHNNVLGYFVEVTAQHGDRLMAPPLNATFIHRQTLAGQVRFTTAELGEIEAKIANAGDRALGLELDIFDRLAAMIDTAGDDLRAAAHAFALLDVATALAKLAVSDNYVRPEVDGSLAFAIEGGRHPVVEQALKRAGEPFIANACDLSPVPPPFPPPLAGEGRVGAGQIWLLTGPNMAGKSTFLRQNALIALLAQTGSFVPASRARIGIVDRLFSRVGAADDLARGRSTFMVEMVETATILNQATERALVILDEIGRGTATFDGLSIAWAAIEHLHEQNRCRALFATHYHELTALSAKLPRLFNATVRVKEWRGEVVFLHEVLPGSADRSYGIQVAKLAGLPPSVVARAKSVLAKLEANDRGQSARTLADDLPLFAMTARAPVEPPPPSEAEQLIEAVRALHPDELSPREALDALYALKAKLPKAD.

Residue 671 to 678 (GPNMAGKS) participates in ATP binding.

The protein belongs to the DNA mismatch repair MutS family.

Functionally, this protein is involved in the repair of mismatches in DNA. It is possible that it carries out the mismatch recognition step. This protein has a weak ATPase activity. This Rhodopseudomonas palustris (strain BisB5) protein is DNA mismatch repair protein MutS.